The primary structure comprises 323 residues: Mycothiol acetyltransferase (323 aa).

Glu44 provides a ligand contact to 1D-myo-inositol 2-(L-cysteinylamino)-2-deoxy-alpha-D-glucopyranoside. 98–100 (LAV) contributes to the acetyl-CoA binding site. One can recognise an N-acetyltransferase domain in the interval 173–323 (VSLRAFIPGQ…DVMYGPKNGG (151 aa)). Glu200, Lys240, and Glu253 together coordinate 1D-myo-inositol 2-(L-cysteinylamino)-2-deoxy-alpha-D-glucopyranoside. Acetyl-CoA is bound by residues 257–259 (VGV) and 264–270 (QGMGLGK). Tyr291 is a 1D-myo-inositol 2-(L-cysteinylamino)-2-deoxy-alpha-D-glucopyranoside binding site.

It belongs to the acetyltransferase family. MshD subfamily. Monomer.

It catalyses the reaction 1D-myo-inositol 2-(L-cysteinylamino)-2-deoxy-alpha-D-glucopyranoside + acetyl-CoA = mycothiol + CoA + H(+). In terms of biological role, catalyzes the transfer of acetyl from acetyl-CoA to desacetylmycothiol (Cys-GlcN-Ins) to form mycothiol. The chain is Mycothiol acetyltransferase from Arthrobacter sp. (strain FB24).